The sequence spans 390 residues: Pyruvate dehydrogenase E1 component subunit alpha, somatic form, mitochondrial (390 aa).

A mitochondrion-targeting transit peptide spans 1–29 (MRKMLAAVSRVLSGASQKPASRVLVASRN). Lys63 is subject to N6-acetyllysine; alternate. At Lys63 the chain carries N6-succinyllysine; alternate. Pyruvate-binding residues include His92, Tyr118, Arg119, Ala157, Gly165, Val167, Asp196, Gly197, Ala198, Asn225, and Tyr227. Thiamine diphosphate is bound by residues Tyr118 and Arg119. Thiamine diphosphate-binding residues include Gly165, Val167, Asp196, Gly197, Ala198, and Asn225. Asp196 lines the Mg(2+) pocket. Positions 225 and 227 each coordinate Mg(2+). Ser232 is subject to Phosphoserine; by PDK1. Lys244 is modified (N6-acetyllysine; alternate). The residue at position 244 (Lys244) is an N6-succinyllysine; alternate. Position 277 is an N6-succinyllysine (Lys277). Thiamine diphosphate is bound at residue His292. At Ser293 the chain carries Phosphoserine; by PDK1, PDK2, PDK3 and PDK4. Ser295 carries the post-translational modification Phosphoserine. Ser300 is modified (phosphoserine; by PDK1, PDK2, PDK3 and PDK4). At Tyr301 the chain carries Phosphotyrosine. At Lys313 the chain carries N6-acetyllysine; alternate. An N6-succinyllysine; alternate modification is found at Lys313. 2 positions are modified to N6-acetyllysine: Lys321 and Lys336. Position 385 is an N6-succinyllysine (Lys385).

Heterotetramer of two PDHA1 and two PDHB subunits. The heterotetramer interacts with DLAT, and is part of the multimeric pyruvate dehydrogenase complex that contains multiple copies of pyruvate dehydrogenase (E1), dihydrolipoamide acetyltransferase (DLAT, E2) and lipoamide dehydrogenase (DLD, E3). These subunits are bound to an inner core composed of about 48 DLAT and 12 PDHX molecules. Thiamine diphosphate serves as cofactor. The cofactor is Mg(2+). Post-translationally, phosphorylation at Ser-232, Ser-293 and Ser-300 by PDK family kinases inactivates the enzyme; for this phosphorylation at a single site is sufficient. Phosphorylation at Ser-293 interferes with access to active site, and thereby inactivates the enzyme. Dephosphorylation at all three sites, i.e. at Ser-232, Ser-293 and Ser-300, is required for reactivation. In terms of processing, acetylation alters the phosphorylation pattern. Deacetylated by SIRT3.

It is found in the mitochondrion matrix. The catalysed reaction is N(6)-[(R)-lipoyl]-L-lysyl-[protein] + pyruvate + H(+) = N(6)-[(R)-S(8)-acetyldihydrolipoyl]-L-lysyl-[protein] + CO2. Its activity is regulated as follows. Pyruvate dehydrogenase activity is inhibited by phosphorylation of PDHA1; it is reactivated by dephosphorylation. Its function is as follows. The pyruvate dehydrogenase complex catalyzes the overall conversion of pyruvate to acetyl-CoA and CO(2), and thereby links the glycolytic pathway to the tricarboxylic cycle. The sequence is that of Pyruvate dehydrogenase E1 component subunit alpha, somatic form, mitochondrial (PDHA1) from Pan troglodytes (Chimpanzee).